The chain runs to 348 residues: Anthranilate phosphoribosyltransferase (348 aa).

Residues G81, 84–85, T89, 91–94, 109–117, and S121 each bind 5-phospho-alpha-D-ribose 1-diphosphate; these read GD, NIST, and KHGNRSSSG. Residue G81 participates in anthranilate binding. A Mg(2+)-binding site is contributed by S93. N112 lines the anthranilate pocket. An anthranilate-binding site is contributed by R167. The Mg(2+) site is built by D226 and E227.

Belongs to the anthranilate phosphoribosyltransferase family. Homodimer. Mg(2+) serves as cofactor.

It carries out the reaction N-(5-phospho-beta-D-ribosyl)anthranilate + diphosphate = 5-phospho-alpha-D-ribose 1-diphosphate + anthranilate. The protein operates within amino-acid biosynthesis; L-tryptophan biosynthesis; L-tryptophan from chorismate: step 2/5. Functionally, catalyzes the transfer of the phosphoribosyl group of 5-phosphorylribose-1-pyrophosphate (PRPP) to anthranilate to yield N-(5'-phosphoribosyl)-anthranilate (PRA). The protein is Anthranilate phosphoribosyltransferase of Nitrosopumilus maritimus (strain SCM1).